Here is a 285-residue protein sequence, read N- to C-terminus: Putative cuticle collagen 75 (285 aa).

2 triple-helical region regions span residues 87–116 (GRIG…PGEL) and 133–261 (GPKG…PGLD). Residues 207 to 231 (PGAPGIPGEEGLSGPTGQPGSPGSI) show a composition bias toward low complexity. Residues 207–257 (PGAPGIPGEEGLSGPTGQPGSPGSIGAMGYEGAYGDRGEPGPPGPIGRRGG) are disordered.

Belongs to the cuticular collagen family. As to quaternary structure, collagen polypeptide chains are complexed within the cuticle by disulfide bonds and other types of covalent cross-links.

In terms of biological role, nematode cuticles are composed largely of collagen-like proteins. The cuticle functions both as an exoskeleton and as a barrier to protect the worm from its environment. The protein is Putative cuticle collagen 75 (col-75) of Caenorhabditis elegans.